The chain runs to 141 residues: NADH dehydrogenase [ubiquinone] 1 alpha subcomplex subunit 11 (141 aa).

The residue at position 2 (Ala-2) is an N-acetylalanine. A run of 2 helical transmembrane segments spans residues 21 to 43 (KAYS…RVTL) and 58 to 80 (QYTF…SAHV).

The protein belongs to the complex I NDUFA11 subunit family. Complex I is composed of 45 different subunits.

Its subcellular location is the mitochondrion inner membrane. Accessory subunit of the mitochondrial membrane respiratory chain NADH dehydrogenase (Complex I), that is believed not to be involved in catalysis. Complex I functions in the transfer of electrons from NADH to the respiratory chain. The immediate electron acceptor for the enzyme is believed to be ubiquinone. This Homo sapiens (Human) protein is NADH dehydrogenase [ubiquinone] 1 alpha subcomplex subunit 11 (NDUFA11).